A 517-amino-acid polypeptide reads, in one-letter code: MAFTHVCLWTLVAFVLTWTVFYLTNMKKKATDLADTVAEDQKDGAADVIIVGAGVGGSALAYALAKDGRRVHVIERDMREPERMMGEFMQPGGRLMLSKLGLQDCLEDIDAQKATGLAVYKDGKEADAPFPVDNNNFSYEPSARSFHNGRFVQQLRRKAFSLSNVRLEEGTVKSLLEEKGVVKGVTYKNKEGEETTALAPLTVVCDGCYSNLRRSLNDDNNAEIMSYIVGYISKNCRLEEPEKLHLILSKPSFTMVYQISSTDVRCGFEVLPENFPSIANGEMSTFMKNTIVPQVPPKLRKIFLKGIDEGAHIKVVPAKRMTSTLSKKKGVIVLGDAFNMRHPVVASGMMVLLSDILILRRLLQPLSNLGDANKVSEVINSFYDIRKPMSATVNTLGNAFSQVLIGSTDEAKEAMRQGVYDYLCSGGFRTSGMMALLGGMNPRPLSLVYHLCAITLSSIGQLLSPFPSPLRIWHSLKLFGLAMKMLVPNLKAEGVSQMLFPANAAAYHKSYMAATTL.

The next 2 helical transmembrane spans lie at 3-23 and 45-65; these read FTHVCLWTLVAFVLTWTVFYL and AADVIIVGAGVGGSALAYALA. FAD is bound by residues 55–56, 75–76, arginine 83, phenylalanine 88, arginine 156, valine 172, aspartate 336, and methionine 349; these read VG and ER. A helical transmembrane segment spans residues 447-467; the sequence is LVYHLCAITLSSIGQLLSPFP.

This sequence belongs to the squalene monooxygenase family. FAD serves as cofactor. As to expression, expressed in seedlings, leaves, stems, inflorescences and siliques.

The protein localises to the membrane. The enzyme catalyses squalene + reduced [NADPH--hemoprotein reductase] + O2 = (S)-2,3-epoxysqualene + oxidized [NADPH--hemoprotein reductase] + H2O + H(+). Its pathway is terpene metabolism; lanosterol biosynthesis; lanosterol from farnesyl diphosphate: step 2/3. Catalyzes the stereospecific oxidation of squalene to (S)-2,3-epoxysqualene, and is considered to be a rate-limiting enzyme in steroid biosynthesis. The sequence is that of Squalene epoxidase 6 (SQE6) from Arabidopsis thaliana (Mouse-ear cress).